A 527-amino-acid polypeptide reads, in one-letter code: Acyl-coenzyme A thioesterase 4, mitochondrial (527 aa).

A mitochondrion-targeting transit peptide spans 1–75 (MMTPIGIRIR…FLFDPPPIRF (75 aa)). HotDog ACOT-type domains lie at 172–294 (ILYN…RDSK) and 370–487 (KDTC…GPEA).

The protein belongs to the acyl coenzyme A hydrolase family. As to expression, mostly expressed at low levels in glandular trichomes (lupulin glands), and, to a lower extent, in stems, leaves, flowers and cones.

The protein resides in the mitochondrion. The catalysed reaction is 2-methylpropanoyl-CoA + H2O = 2-methylpropanoate + CoA + H(+). The enzyme catalyses propanoyl-CoA + H2O = propanoate + CoA + H(+). It carries out the reaction octanoyl-CoA + H2O = octanoate + CoA + H(+). It catalyses the reaction butanoyl-CoA + H2O = butanoate + CoA + H(+). The catalysed reaction is 3-methylbutanoyl-CoA + H2O = 3-methylbutanoate + CoA + H(+). The enzyme catalyses 2-methylbutanoyl-CoA + H2O = 2-methylbutanoate + CoA + H(+). Acyl-CoA thioesterases are a group of enzymes that catalyze the hydrolysis of acyl-CoAs to the free fatty acid and coenzyme A (CoASH), providing the potential to regulate intracellular levels of acyl-CoAs, free fatty acids and CoASH. Active on acyl CoAs with short chains (propanoyl-CoA and butanoyl-CoA), branched short chains (2-methylpropanoyl-CoA, 2-methylbutanoyl-CoA and 3-methylbutanoyl-CoA) and medium chains (octanoyl-CoA). The sequence is that of Acyl-coenzyme A thioesterase 4, mitochondrial from Humulus lupulus (European hop).